Reading from the N-terminus, the 468-residue chain is Neuronal acetylcholine receptor subunit alpha-5 (468 aa).

The N-terminal stretch at 1-22 (MAARGSGPRALRLLLLVQLVAG) is a signal peptide. The Extracellular segment spans residues 23–254 (RCGLAGAAGG…VIKRLPLFYT (232 aa)). N155, N183, and N229 each carry an N-linked (GlcNAc...) asparagine glycan. Residues C170 and C184 are joined by a disulfide bond. A disulfide bridge connects residues C234 and C235. Transmembrane regions (helical) follow at residues 255 to 275 (LFLI…FYLP), 282 to 302 (ICLC…IEEI), and 317 to 337 (LVFT…AINI). Residues 338–429 (HHRSSSTHNA…WKFIAQVLDR (92 aa)) are Cytoplasmic-facing. Residues 430–451 (MFLWTFLFVSIVGSLGLFVPVI) form a helical membrane-spanning segment. Residues 452–468 (YKWANILIPVHIGNANK) lie on the Extracellular side of the membrane.

The protein belongs to the ligand-gated ion channel (TC 1.A.9) family. Acetylcholine receptor (TC 1.A.9.1) subfamily. Alpha-5/CHRNA5 sub-subfamily. In terms of assembly, neuronal AChR that forms heteropentamers composed of two different type of subunits: alpha and non-alpha (beta). CHRNA5/alpha-5 subunit is only able to form functional nAChRs when co-assembled with another alpha subunit, can be combined to CHRNA4/alpha-4 or CHRNA3/alpha-3 and CHRNB4/beta-4 or CHRNB2/beta-2 to give rise to functional receptors. Interacts with LYPD6.

Its subcellular location is the synaptic cell membrane. It is found in the cell membrane. The catalysed reaction is Ca(2+)(in) = Ca(2+)(out). It catalyses the reaction K(+)(in) = K(+)(out). The enzyme catalyses Na(+)(in) = Na(+)(out). Its activity is regulated as follows. Activated by a myriad of ligands such as acetylcholine, cytisine, nicotine, choline and epibatidine. Component of neuronal acetylcholine receptors (nAChRs) that function as pentameric, ligand-gated cation channels with high calcium permeability among other activities. nAChRs are excitatory neurotrasnmitter receptors formed by a collection of nAChR subunits known to mediate synaptic transmission in the nervous system and the neuromuscular junction. Each nAchR subunit confers differential attributes to channel properties, including activation, deactivation and desensitization kinetics, pH sensitivity, cation permeability, and binding to allosteric modulators. Has an accessory rather than functional role and is only able to form functional nAChRs when co-assembled with another beta subunit. Participates in pentameric assemblies along with CHRNA3, CHRNA4, CHRNB2 and CHRNB4. Increases receptor sensitivity to acetylcholine and nicotine when associated with CHRNA4 and CHRNB2. Plays a role in nicotine addiction. This is Neuronal acetylcholine receptor subunit alpha-5 from Homo sapiens (Human).